An 879-amino-acid polypeptide reads, in one-letter code: Valine--tRNA ligase (879 aa).

A 'HIGH' region motif is present at residues 45 to 55 (PNVTGKLHLGH). The 'KMSKS' region motif lies at 521–525 (KMSKS). Lys-524 contributes to the ATP binding site. Positions 806–879 (LTELVNVDEE…ERIQDLKESK (74 aa)) form a coiled coil.

It belongs to the class-I aminoacyl-tRNA synthetase family. ValS type 1 subfamily. In terms of assembly, monomer.

The protein localises to the cytoplasm. It catalyses the reaction tRNA(Val) + L-valine + ATP = L-valyl-tRNA(Val) + AMP + diphosphate. In terms of biological role, catalyzes the attachment of valine to tRNA(Val). As ValRS can inadvertently accommodate and process structurally similar amino acids such as threonine, to avoid such errors, it has a 'posttransfer' editing activity that hydrolyzes mischarged Thr-tRNA(Val) in a tRNA-dependent manner. The polypeptide is Valine--tRNA ligase (Lactobacillus acidophilus (strain ATCC 700396 / NCK56 / N2 / NCFM)).